The sequence spans 128 residues: Nucleoside diphosphate kinase B (128 aa).

Met-1 bears the N-acetylmethionine mark. 5 residues coordinate ATP: Lys-9, Phe-39, Thr-70, Arg-81, and Asn-91. Residue His-94 is the Pros-phosphohistidine intermediate of the active site.

The protein belongs to the NDK family. Mg(2+) serves as cofactor.

It localises to the cytoplasm. It is found in the nucleus. The protein resides in the cell projection. The protein localises to the lamellipodium. Its subcellular location is the ruffle. It catalyses the reaction a 2'-deoxyribonucleoside 5'-diphosphate + ATP = a 2'-deoxyribonucleoside 5'-triphosphate + ADP. The catalysed reaction is a ribonucleoside 5'-diphosphate + ATP = a ribonucleoside 5'-triphosphate + ADP. Functionally, major role in the synthesis of nucleoside triphosphates other than ATP. The polypeptide is Nucleoside diphosphate kinase B (nme2) (Merluccius australis australis (Austral hake)).